The primary structure comprises 678 residues: Serine/threonine-protein kinase mph1 (678 aa).

2 disordered regions span residues 39–93 (KNDT…NSAL) and 114–209 (LPST…SNSV). Composition is skewed to polar residues over residues 41 to 66 (DTFS…SSGA) and 114 to 125 (LPSTNASHSEVS). A Protein kinase domain is found at 316-607 (FIKLGVVGKG…LVHPFLNPLP (292 aa)). ATP is bound by residues 322-330 (VGKGGSSMV) and K345. The Proton acceptor role is filled by D442.

It belongs to the protein kinase superfamily. Ser/Thr protein kinase family.

The catalysed reaction is L-seryl-[protein] + ATP = O-phospho-L-seryl-[protein] + ADP + H(+). It catalyses the reaction L-threonyl-[protein] + ATP = O-phospho-L-threonyl-[protein] + ADP + H(+). The enzyme catalyses L-tyrosyl-[protein] + ATP = O-phospho-L-tyrosyl-[protein] + ADP + H(+). Its function is as follows. Involved in mitotic spindle assembly checkpoint signaling, a process that delays anaphase until chromosomes are bioriented on the spindle, and in the repair of incorrect mitotic kinetochore-spindle microtubule attachments. Phosphorylates spc7/knl1 on MELT motifs; phosphorylation is required for recruitment of the BUB1-BUB3 complex to kinetochores. In Schizosaccharomyces pombe (strain 972 / ATCC 24843) (Fission yeast), this protein is Serine/threonine-protein kinase mph1.